Here is a 337-residue protein sequence, read N- to C-terminus: Glycerol-3-phosphate dehydrogenase [NAD(P)+] 2 (337 aa).

3 residues coordinate NADPH: threonine 11, tryptophan 12, and lysine 105. Residues lysine 105, glycine 139, and threonine 141 each contribute to the sn-glycerol 3-phosphate site. Position 143 (alanine 143) interacts with NADPH. Sn-glycerol 3-phosphate-binding residues include lysine 194, aspartate 247, serine 257, arginine 258, and asparagine 259. The active-site Proton acceptor is lysine 194. Position 258 (arginine 258) interacts with NADPH. The NADPH site is built by valine 282 and glutamate 284.

Belongs to the NAD-dependent glycerol-3-phosphate dehydrogenase family.

Its subcellular location is the cytoplasm. The enzyme catalyses sn-glycerol 3-phosphate + NAD(+) = dihydroxyacetone phosphate + NADH + H(+). It carries out the reaction sn-glycerol 3-phosphate + NADP(+) = dihydroxyacetone phosphate + NADPH + H(+). It participates in membrane lipid metabolism; glycerophospholipid metabolism. In terms of biological role, catalyzes the reduction of the glycolytic intermediate dihydroxyacetone phosphate (DHAP) to sn-glycerol 3-phosphate (G3P), the key precursor for phospholipid synthesis. The polypeptide is Glycerol-3-phosphate dehydrogenase [NAD(P)+] 2 (Lactobacillus delbrueckii subsp. bulgaricus (strain ATCC 11842 / DSM 20081 / BCRC 10696 / JCM 1002 / NBRC 13953 / NCIMB 11778 / NCTC 12712 / WDCM 00102 / Lb 14)).